A 367-amino-acid chain; its full sequence is MSLRRIMVTAVRNLHPVTLLPSPRINILYGANGSGKTSVLEAVHLLGLARSFRSSRLNPVIQYEQPACTVFGEVELTEGGTCKLGVSRERQGEFTIRIDGQNARSAAQLAELLPLQLINPDSFRLLEGAPKIRRQFLDWGVFHVEPRFLPAWQRLQKALRQRNSWLRHGTLDPASQAAWDRELCLASAEIDEYRRNYIKALKPVFERTLSELVELDGLTLSYYRGWDKDRELQEVLASSLLRDQQMGHTQAGPQRADLRLRLAGNNAADILSRGQQKLVVCALRIAQGHLVSQARRGHCIYLVDDLPSELDDQHRRALCRLLEELRCQVFITCVDHELLREGWQTETPVALFHVEQGRITQTHDHRE.

An ATP-binding site is contributed by 30-37 (GANGSGKT).

This sequence belongs to the RecF family.

The protein localises to the cytoplasm. Functionally, the RecF protein is involved in DNA metabolism; it is required for DNA replication and normal SOS inducibility. RecF binds preferentially to single-stranded, linear DNA. It also seems to bind ATP. The protein is DNA replication and repair protein RecF of Pseudomonas putida (strain GB-1).